We begin with the raw amino-acid sequence, 258 residues long: MLAIISPAKTLDYQSAVPKLAVTQPLLTDYSQQLIDVCRQLTPAEIGSLMSVSDKLAGLNAARFADWQKEHNEQNARAAIYAFRGDVYTGLDADSLTAEDIQFAQSHLRMLSGLYGLLRPLDLMQPYRLEMSTKLATAKGKDLYQFWGEIITESLQNALDEQGDDVLINLASDEYYKVVKPSKLQARIVKPVFLDHKNGKYKVISFYAKKARGLMSRYLITQRINRIEQLKHFNLGGYQFDDSVSTEREWVFKRDISE.

The protein belongs to the UPF0246 family.

This chain is UPF0246 protein Asuc_0575, found in Actinobacillus succinogenes (strain ATCC 55618 / DSM 22257 / CCUG 43843 / 130Z).